The sequence spans 323 residues: MTKTKIIFMGTPQFAATVLKGLIDSNKYEILAVVTQPDRKVGRKQELRMTPVKELALTVNLPVLQPEKLSGSVEMTQIMTLLESGEVGIVTAAFGQFLPGKLLVVARFAVNTHASLLPKYRGGAPIHYAIMNGEKEAGVTIMEMIRKMDAGDMIAQNSTPILEEDNVGTMFEKLAFVGRDLLLETLPKYLEGQLKAQAQNEDEVTFSPNISPEEEKIDWNKSAREIFNKVRGMNPFPVAHTLWNGERFKIYESKVADEIVNNSDNPLQAGQIVEKTKKSLKVATGNGILELLTVQPAGKPKMDIVSFLNGLGQKMQVGDKLGD.

115–118 provides a ligand contact to (6S)-5,6,7,8-tetrahydrofolate; that stretch reads SLLP.

It belongs to the Fmt family.

The catalysed reaction is L-methionyl-tRNA(fMet) + (6R)-10-formyltetrahydrofolate = N-formyl-L-methionyl-tRNA(fMet) + (6S)-5,6,7,8-tetrahydrofolate + H(+). Its function is as follows. Attaches a formyl group to the free amino group of methionyl-tRNA(fMet). The formyl group appears to play a dual role in the initiator identity of N-formylmethionyl-tRNA by promoting its recognition by IF2 and preventing the misappropriation of this tRNA by the elongation apparatus. This Lactococcus lactis subsp. cremoris (strain MG1363) protein is Methionyl-tRNA formyltransferase.